The following is a 482-amino-acid chain: MLSQNQAEEAIVTNMNETEQEGGSSLEEIAEDQSMFNFKSFLWHGGSVWDAWFSCASNQVAQVLLTLPYSFSQLGMVSGIVFQIFYGLIGSWTAYLISVLYVEYRARKEKENVNFKNHVIQWFEVLDGLLGRYWKALGLAFNCTFLLFGSVIQLIACASNIYYINDKLDKRTWTYIFGACCATTVFIPSFHNYRIWSFLGLGMTTYTAWYMAIAAIVNGQIENVVHSGPTKLVLYFTGATNILYTFGGHAVTVEIMHAMWKPQKFKYIYFLATLYVFTLTIPSAVAVYWAFGDELLNHSNAFSLLPKNGFRDAAVILMLIHQFITFGFACTPLYFVWEKVIGMHDTKSICLRALVRLPVVIPIWFLAIIFPFFGPINSAVGALLVTFTVYIIPALAHMLTYRTASARKNAVEKPPSFLPSWTAVYVLNAFIVVWVLVVGFGFGGWASMTNFIRQIDTFGLFAKCYQCKPPTPPQAPSPHARH.

The Cytoplasmic portion of the chain corresponds to Met1 to Gln59. The chain crosses the membrane as a helical span at residues Val60–Val77. Residues Ser78–Gly79 are Extracellular-facing. Residues Ile80–Leu100 form a helical membrane-spanning segment. The Cytoplasmic segment spans residues Tyr101–Lys135. The chain crosses the membrane as a helical span at residues Ala136–Ala156. The Extracellular segment spans residues Cys157–Thr172. The chain crosses the membrane as a helical span at residues Trp173 to Tyr193. Residues Arg194–Trp196 are Cytoplasmic-facing. The helical transmembrane segment at Ser197–Val217 threads the bilayer. The Extracellular portion of the chain corresponds to Asn218 to Leu232. The helical transmembrane segment at Val233 to Val253 threads the bilayer. Over Glu254–Lys266 the chain is Cytoplasmic. The chain crosses the membrane as a helical span at residues Tyr267–Val287. Residues Tyr288 to Ala314 are Extracellular-facing. Residue Asn297 is glycosylated (N-linked (GlcNAc...) asparagine). Residues Val315 to Phe335 form a helical membrane-spanning segment. The Cytoplasmic portion of the chain corresponds to Val336 to Arg356. A helical membrane pass occupies residues Leu357–Asn377. Ser378 is a topological domain (extracellular). A helical transmembrane segment spans residues Ala379–Leu399. Topologically, residues Thr400–Thr422 are cytoplasmic. A helical transmembrane segment spans residues Ala423–Gly443. At Gly444–His482 the chain is on the extracellular side.

This sequence belongs to the amino acid/polyamine transporter 2 family. Amino acid/auxin permease (AAAP) (TC 2.A.18.1) subfamily. In terms of tissue distribution, shoots and roots of nodulating plants, at low levels.

The protein resides in the cell membrane. Carrier protein involved in proton-driven auxin influx. Mediates the formation of auxin gradient from developing leaves (site of auxin biosynthesis) to tips by contributing to the loading of auxin in vascular tissues and facilitating acropetal (base to tip) auxin transport within inner tissues of the root apex, and basipetal (tip to base) auxin transport within outer tissues of the root apex. May be involved in lateral roots and nodules formation. This chain is Auxin transporter-like protein 4 (LAX4), found in Medicago truncatula (Barrel medic).